We begin with the raw amino-acid sequence, 187 residues long: Elongation factor P (187 aa).

This sequence belongs to the elongation factor P family.

Its subcellular location is the cytoplasm. It functions in the pathway protein biosynthesis; polypeptide chain elongation. In terms of biological role, involved in peptide bond synthesis. Stimulates efficient translation and peptide-bond synthesis on native or reconstituted 70S ribosomes in vitro. Probably functions indirectly by altering the affinity of the ribosome for aminoacyl-tRNA, thus increasing their reactivity as acceptors for peptidyl transferase. The polypeptide is Elongation factor P (Corynebacterium glutamicum (strain R)).